The chain runs to 308 residues: MKTRKHYIDYFDSLITKHRDYQKGHREVINNILRDFLDYIGWENHICKDTQNAYSHSLGSLLEWFKRSRLLSSVIAVNNVKKFMYPSYIETNVSNDNVVTFNIINDVKRTYLEEWFSKDSKEKFASEFSHEFNNNVNMLFKHSRRLFCHGDDRTINVNVKDWVTAKFIPSSQNGPFELLIIVCAPHEIYKNLPYMKPCEANKHNKTIRSLTYKLRTLLSKMDVVESFDDNTNYGLSLFETKVVIKLKDPNKFKPTPKPNHGNDTMKEEREYLSTRLIEVEKQIEEHTKVLKDLTAKANGLRNAIEVLK.

This is an uncharacterized protein from Escherichia coli (Bacteriophage T4).